The sequence spans 201 residues: Small ribosomal subunit protein uS4c (201 aa).

Residues 89 to 157 enclose the S4 RNA-binding domain; sequence MRLDNILFRL…VQNYIASSDP (69 aa).

This sequence belongs to the universal ribosomal protein uS4 family. As to quaternary structure, part of the 30S ribosomal subunit. Contacts protein S5. The interaction surface between S4 and S5 is involved in control of translational fidelity.

It is found in the plastid. Its subcellular location is the chloroplast. In terms of biological role, one of the primary rRNA binding proteins, it binds directly to 16S rRNA where it nucleates assembly of the body of the 30S subunit. Its function is as follows. With S5 and S12 plays an important role in translational accuracy. The polypeptide is Small ribosomal subunit protein uS4c (rps4) (Triticum aestivum (Wheat)).